Consider the following 121-residue polypeptide: MVRKITKTNPNLIKLIRNLRKKSSQEGAAIWKDVARRLERPTRNRAAVNISKINRHSDEDETVLVPGKVLGSGNLDHRVQVVALSFSQTARDKIERAGGECLTLGKIVEENPAIKNIKIIE.

This sequence belongs to the eukaryotic ribosomal protein eL18 family.

This Methanothermobacter thermautotrophicus (strain ATCC 29096 / DSM 1053 / JCM 10044 / NBRC 100330 / Delta H) (Methanobacterium thermoautotrophicum) protein is Large ribosomal subunit protein eL18.